The primary structure comprises 427 residues: Glutamate-1-semialdehyde 2,1-aminomutase (427 aa).

K265 is modified (N6-(pyridoxal phosphate)lysine).

It belongs to the class-III pyridoxal-phosphate-dependent aminotransferase family. HemL subfamily. In terms of assembly, homodimer. It depends on pyridoxal 5'-phosphate as a cofactor.

The protein localises to the cytoplasm. The enzyme catalyses (S)-4-amino-5-oxopentanoate = 5-aminolevulinate. Its pathway is porphyrin-containing compound metabolism; protoporphyrin-IX biosynthesis; 5-aminolevulinate from L-glutamyl-tRNA(Glu): step 2/2. This Marinomonas sp. (strain MWYL1) protein is Glutamate-1-semialdehyde 2,1-aminomutase.